We begin with the raw amino-acid sequence, 430 residues long: Adenylosuccinate synthetase (430 aa).

GTP is bound by residues 13–19 (GDEGKGK) and 41–43 (GHT). Aspartate 14 (proton acceptor) is an active-site residue. Mg(2+)-binding residues include aspartate 14 and glycine 41. IMP-binding positions include 14–17 (DEGK), 39–42 (NAGH), threonine 130, arginine 144, glutamine 225, threonine 240, and arginine 304. The active-site Proton donor is histidine 42. Substrate is bound at residue 300–306 (ASTGRPR). GTP contacts are provided by residues arginine 306, 332–334 (KLD), and 414–416 (STG).

Belongs to the adenylosuccinate synthetase family. Homodimer. Mg(2+) serves as cofactor.

The protein localises to the cytoplasm. The catalysed reaction is IMP + L-aspartate + GTP = N(6)-(1,2-dicarboxyethyl)-AMP + GDP + phosphate + 2 H(+). Its pathway is purine metabolism; AMP biosynthesis via de novo pathway; AMP from IMP: step 1/2. Plays an important role in the de novo pathway of purine nucleotide biosynthesis. Catalyzes the first committed step in the biosynthesis of AMP from IMP. This is Adenylosuccinate synthetase from Xanthomonas axonopodis pv. citri (strain 306).